Here is a 1044-residue protein sequence, read N- to C-terminus: GRB10-interacting GYF protein 1 (1044 aa).

Residues Ser24, Ser28, Ser137, and Ser157 each carry the phosphoserine modification. Disordered regions lie at residues Gly104–Pro290 and Ala306–Glu424. 2 stretches are compositionally biased toward basic and acidic residues: residues Asn148–Phe179 and Pro186–Glu203. At Ser228 the chain carries Phosphoserine. Composition is skewed to basic and acidic residues over residues Gly237–Arg265 and Gly316–Leu332. Acidic residues predominate over residues Glu333 to Arg350. Ser343 carries the post-translational modification Phosphoserine. Residues Asn366–Leu379 show a composition bias toward low complexity. Residues Ala389–Arg403 are compositionally biased toward basic and acidic residues. Position 408 is a phosphoserine (Ser408). A GYF domain is found at Ala476–Gly524. A phosphoserine mark is found at Ser540 and Ser634. Residues Lys692–Arg706 are compositionally biased toward basic and acidic residues. Disordered regions lie at residues Lys692–Glu721, Glu820–Trp842, Ser855–Thr883, Gln966–Trp987, Asn1000–Met1019, and Pro1024–Tyr1044. The segment covering Asp829–Leu839 has biased composition (gly residues). Composition is skewed to low complexity over residues Ser855–Arg877 and Gln970–Gln984. Ser863 is subject to Phosphoserine.

It belongs to the GIGYF family. In terms of assembly, interacts with GRB10. This transient binding is increased under IGF1 stimulation and leads to recruitment of GIGYF1/GRB10 complex to IGF1 receptor. Interacts with DDX6. As to expression, ubiquitous. Lower expression in skeletal muscle, liver and testis.

In terms of biological role, may act cooperatively with GRB10 to regulate tyrosine kinase receptor signaling. May increase IGF1 receptor phosphorylation under IGF1 stimulation as well as phosphorylation of IRS1 and SHC1. This is GRB10-interacting GYF protein 1 (Gigyf1) from Mus musculus (Mouse).